Reading from the N-terminus, the 234-residue chain is Arsenate respiratory reductase iron-sulfur subunit ArrB (234 aa).

3 4Fe-4S ferredoxin-type domains span residues 3-32 (LGMV…NDGI), 48-79 (VKYT…KDKR), and 80-109 (GLTL…FNAA). The [4Fe-4S] cluster site is built by cysteine 12, cysteine 15, cysteine 18, cysteine 22, cysteine 57, cysteine 60, cysteine 65, cysteine 69, cysteine 89, cysteine 92, cysteine 95, cysteine 99, cysteine 164, cysteine 167, cysteine 179, and cysteine 183.

In terms of assembly, heterodimer composed of one large subunit (ArrA) and one small subunit (ArrB). [4Fe-4S] cluster serves as cofactor.

The protein resides in the periplasm. Phosphate is a competitive inhibitor. Its function is as follows. Component of the arsenate respiratory reductase (Arr) complex, which catalyzes the reduction of arsenate (As(V)) to arsenite (As(III)). ArrB is probably the electron transfer subunit. The periplasmic localization of this complex may allow the cell to couple arsenate reduction to energy production before arsenate can be transported to the cell cytoplasm and enter the ars detoxification pathway, an energy-requiring process. This is Arsenate respiratory reductase iron-sulfur subunit ArrB from Shewanella sp. (strain ANA-3).